Reading from the N-terminus, the 190-residue chain is Abscisic acid receptor PYL2 (190 aa).

An START-like region spans residues 28–182 (FEPDPTTCTS…NLQKLGVAAT (155 aa)). Abscisate contacts are provided by residues K64, 93-98 (ASTSTE), 120-126 (RLKNYKS), and E147. The short motif at 89-93 (SGLPA) is the Gate loop element. The Latch loop motif lies at 119 to 121 (HRL).

The protein belongs to the PYR/PYL/RCAR abscisic acid intracellular receptor family. As to quaternary structure, homodimer. Binds ABA on one subunit only. Interacts with HAB1, ABI1 and ABI2, and possibly with other PP2Cs. Binds to CARs protein in an ABA-independent manner, both at the plasma membrane and in the nucleus.

It is found in the cytoplasm. Its subcellular location is the nucleus. It localises to the cell membrane. Receptor for abscisic acid (ABA) required for ABA-mediated responses such as stomatal closure and germination inhibition. Inhibits the activity of group-A protein phosphatases type 2C (PP2Cs) when activated by ABA. Can be activated by both (-)-ABA and (+)-ABA. This Arabidopsis thaliana (Mouse-ear cress) protein is Abscisic acid receptor PYL2 (PYL2).